The following is a 1704-amino-acid chain: Phospholipid-transporting ATPase ABCA3 (1704 aa).

Asparagine 14 carries N-linked (GlcNAc...) asparagine glycosylation. Residues 22 to 42 (VLVTVLELFLPLLFSGILIWL) traverse the membrane as a helical segment. N-linked (GlcNAc...) asparagine glycans are attached at residues asparagine 53, asparagine 124, asparagine 140, and asparagine 228. Helical transmembrane passes span 261–283 (YQLP…RAVV), 307–327 (AWFL…TLLF), 344–364 (SLVL…SFMV), 373–393 (IAAA…FFVA), 405–425 (LLSC…IGKF), and 447–467 (FCFG…GLVT). The 234-residue stretch at 530-763 (IKIKHLSKVF…YGAGYHMTLV (234 aa)) folds into the ABC transporter 1 domain. 566–573 (GHNGAGKT) is a binding site for ATP. Asparagine 620 carries N-linked (GlcNAc...) asparagine glycosylation. A run of 7 helical transmembrane segments spans residues 925–945 (MVAA…LAIH), 1100–1120 (IALN…ILAV), 1144–1164 (SALL…LVVF), 1183–1203 (LLLM…SFFF), 1213–1233 (LTIF…IMRI), 1245–1265 (LDHV…SNFY), and 1310–1330 (MAAS…NLLW). Asparagine 1350 carries N-linked (GlcNAc...) asparagine glycosylation. The region spanning 1381–1614 (LIINELSKVY…FGSGYSLQAK (234 aa)) is the ABC transporter 2 domain. 1416–1423 (GFNGAGKT) serves as a coordination point for ATP.

Belongs to the ABC transporter superfamily. ABCA family. Homooligomer; disulfide-linked. N-glycosylated. Localization at intracellular vesicles is accompanied by processing of oligosaccharide from high mannose type to complex type. N-linked glycosylation at Asn-124 and Asn-140 is required for stability and efficient anterograde trafficking and prevents from proteasomal degradation. In terms of processing, proteolytically cleaved by CTSL and to a lower extent by CTSB within multivesicular bodies (MVB) and lamellar bodies (LB) leading to a mature form of 150 kDa. Highly expressed in the lung and moderately expressed in the kidney, adipose, macrophage, and spleen.

It localises to the endosome. It is found in the multivesicular body membrane. The protein resides in the cytoplasmic vesicle membrane. The protein localises to the late endosome membrane. Its subcellular location is the lysosome membrane. The enzyme catalyses a 1,2-diacyl-sn-glycero-3-phospho-(1'-sn-glycerol)(in) + ATP + H2O = a 1,2-diacyl-sn-glycero-3-phospho-(1'-sn-glycerol)(out) + ADP + phosphate + H(+). The catalysed reaction is a 1,2-diacyl-sn-glycero-3-phosphocholine(in) + ATP + H2O = a 1,2-diacyl-sn-glycero-3-phosphocholine(out) + ADP + phosphate + H(+). It catalyses the reaction ATP + H2O + phospholipidSide 1 = ADP + phosphate + phospholipidSide 2.. It carries out the reaction ATP + H2O + xenobioticSide 1 = ADP + phosphate + xenobioticSide 2.. The enzyme catalyses 1,2-dihexadecanoyl-sn-glycero-3-phosphocholine(in) + ATP + H2O = 1,2-dihexadecanoyl-sn-glycero-3-phosphocholine(out) + ADP + phosphate + H(+). The catalysed reaction is cholesterol(in) + ATP + H2O = cholesterol(out) + ADP + phosphate + H(+). Functionally, catalyzes the ATP-dependent transport of phospholipids such as phosphatidylcholine and phosphoglycerol from the cytoplasm into the lumen side of lamellar bodies, in turn participates in the lamellar bodies biogenesis and homeostasis of pulmonary surfactant. Transports preferentially phosphatidylcholine containing short acyl chains. In addition plays a role as an efflux transporter of miltefosine across macrophage membranes and free cholesterol (FC) through intralumenal vesicles by removing FC from the cell as a component of surfactant and protects cells from free cholesterol toxicity. In Mus musculus (Mouse), this protein is Phospholipid-transporting ATPase ABCA3 (Abca3).